Here is a 224-residue protein sequence, read N- to C-terminus: Uracil phosphoribosyltransferase (224 aa).

Arginine 92 serves as a coordination point for 5-phospho-alpha-D-ribose 1-diphosphate. Lysine 109 provides a ligand contact to GTP. Residues arginine 117 and 145 to 153 contribute to the 5-phospho-alpha-D-ribose 1-diphosphate site; that span reads DPMLATGGT. Uracil-binding positions include isoleucine 210 and 215 to 217; that span reads GDA. Aspartate 216 is a binding site for 5-phospho-alpha-D-ribose 1-diphosphate.

Belongs to the UPRTase family. Requires Mg(2+) as cofactor.

It carries out the reaction UMP + diphosphate = 5-phospho-alpha-D-ribose 1-diphosphate + uracil. Its pathway is pyrimidine metabolism; UMP biosynthesis via salvage pathway; UMP from uracil: step 1/1. Its activity is regulated as follows. Allosterically activated by GTP. Functionally, catalyzes the conversion of uracil and 5-phospho-alpha-D-ribose 1-diphosphate (PRPP) to UMP and diphosphate. This Nicotiana tabacum (Common tobacco) protein is Uracil phosphoribosyltransferase (UPP).